A 449-amino-acid polypeptide reads, in one-letter code: UDP-glycosyltransferase 74F2 (449 aa).

UDP-alpha-D-glucose contacts are provided by residues Ser273, 325-327, 342-350, and 364-367; these read SPQ, HCGWNSTME, and WTDQ.

The protein belongs to the UDP-glycosyltransferase family. Expressed in seedlings.

Its function is as follows. Glycosyltransferase that glucosylates benzoic acid and derivatives. Substrate preference is benzoic acid &gt; salicylic acid (SA) &gt; 3-hydroxybenzoic acid &gt; 4-hydroxybenzoic acid. Catalyzes the formation of both SA 2-O-beta-D-glucoside (SAG) and SA glucose ester (SGE). Has high affinity for the tryptophan precursor anthranilate. Catalyzes the formation of anthranilate glucose ester. Is the major source of this activity in the plant. This Arabidopsis thaliana (Mouse-ear cress) protein is UDP-glycosyltransferase 74F2 (UGT74F2).